The following is an 853-amino-acid chain: DNA mismatch repair protein MutS (853 aa).

614-621 (GPNMGGKS) serves as a coordination point for ATP.

This sequence belongs to the DNA mismatch repair MutS family.

Functionally, this protein is involved in the repair of mismatches in DNA. It is possible that it carries out the mismatch recognition step. This protein has a weak ATPase activity. The chain is DNA mismatch repair protein MutS from Citrobacter koseri (strain ATCC BAA-895 / CDC 4225-83 / SGSC4696).